We begin with the raw amino-acid sequence, 400 residues long: Carnosine N-methyltransferase (400 aa).

Residues 1–49 form a disordered region; the sequence is MQRRRRAPPASQPAQDSGHSEEVEVQFSAGRLGSAAPAGPPVRGTAEDE. The S-adenosyl-L-methionine site is built by Q155, R158, G199, E220, D286, F287, and C303. D307 provides a ligand contact to carnosine. Y315 contacts S-adenosyl-L-methionine. Carnosine-binding residues include H338 and Y389.

This sequence belongs to the carnosine N-methyltransferase family. Homodimer. Each monomer accommodates one molecule of carnosine in its active pocket, precisely anchoring the histidine imidazole ring such that only N1 is exposed and deprotonated for methylation. As to expression, expressed at higher level in skeletal muscle compared to other tissues.

It localises to the cytoplasm. Its subcellular location is the cytosol. It is found in the nucleus. The enzyme catalyses carnosine + S-adenosyl-L-methionine = anserine + S-adenosyl-L-homocysteine + H(+). Functionally, N-methyltransferase that catalyzes the formation of anserine (beta-alanyl-N(Pi)-methyl-L-histidine) from carnosine. Anserine, a methylated derivative of carnosine (beta-alanyl-L-histidine), is an abundant constituent of vertebrate skeletal muscles. Also methylates other L-histidine-containing di- and tripeptides such as Gly-Gly-His, Gly-His and homocarnosine (GABA-His). This is Carnosine N-methyltransferase from Rattus norvegicus (Rat).